The sequence spans 231 residues: MSQYQEIAKQGLWHNNPGLVQLLGLCPLLAVTATVTNALGLGFATLLVLVGSNMLVSLVRDYVPKEIRIPVFVMIIAALVTSVQLLINAYAYGLYLSLGIFLPLIVTNCVIIGRAEAFASRNNLAHSAFDGLMMGIGFTCVLVVLGAGRELLGQGTLFEGADLLLGDWAKALVMQVWQVDTPFLLALLPPGAFIGMGLLIAGKNVIDARLKARQPKTQAEPVARVRITKVS.

A run of 6 helical transmembrane segments spans residues 18–38 (GLVQ…VTNA), 39–59 (LGLG…VSLV), 69–89 (IPVF…LINA), 93–113 (GLYL…VIIG), 128–148 (AFDG…LGAG), and 182–202 (PFLL…LIAG).

This sequence belongs to the NqrDE/RnfAE family. As to quaternary structure, the complex is composed of six subunits: RnfA, RnfB, RnfC, RnfD, RnfE and RnfG.

Its subcellular location is the cell inner membrane. Part of a membrane-bound complex that couples electron transfer with translocation of ions across the membrane. The chain is Ion-translocating oxidoreductase complex subunit E from Shewanella denitrificans (strain OS217 / ATCC BAA-1090 / DSM 15013).